A 161-amino-acid chain; its full sequence is Nucleotide-binding protein Shew185_3601 (161 aa).

The protein belongs to the YajQ family.

Its function is as follows. Nucleotide-binding protein. The polypeptide is Nucleotide-binding protein Shew185_3601 (Shewanella baltica (strain OS185)).